The following is a 650-amino-acid chain: Chaperone protein DnaK (650 aa).

Residue threonine 200 is modified to Phosphothreonine; by autocatalysis. The interval 613–634 (QAGAAGAAGAAEGAAHAGGAQQ) is disordered.

Belongs to the heat shock protein 70 family.

Its function is as follows. Acts as a chaperone. In Burkholderia vietnamiensis (strain G4 / LMG 22486) (Burkholderia cepacia (strain R1808)), this protein is Chaperone protein DnaK.